The following is a 400-amino-acid chain: Na(+)/H(+) antiporter NhaA (400 aa).

11 consecutive transmembrane segments (helical) span residues 26 to 46, 71 to 91, 107 to 127, 137 to 157, 166 to 186, 189 to 209, 225 to 245, 273 to 293, 299 to 319, 340 to 360, and 373 to 393; these read AGGILLLFSAVVAMLLANSPL, LIHWINDGFMAVFFVLVGMEV, IFPAIAAIGGMVIPAVVYWFI, GWAIPMATDIAFALGIMALLS, IFLLALAIIDDLGAIVVIALF, HGLSVQALIFSAVAIIVLILL, AILWASVLKSGVHATLAGVII, FVILPLFAFANAGVSFAGIDV, PLLLAIASGLIIGKPVGIFGF, IFAVAVLCGIGFTMSMFLASL, and LSRLGILLGSTVSAILGYLFL.

The protein belongs to the NhaA Na(+)/H(+) (TC 2.A.33) antiporter family.

The protein resides in the cell inner membrane. It carries out the reaction Na(+)(in) + 2 H(+)(out) = Na(+)(out) + 2 H(+)(in). Functionally, na(+)/H(+) antiporter that extrudes sodium in exchange for external protons. This is Na(+)/H(+) antiporter NhaA from Haemophilus influenzae (strain ATCC 51907 / DSM 11121 / KW20 / Rd).